A 445-amino-acid chain; its full sequence is Glycine--tRNA ligase (445 aa).

Residues Arg-97 and Glu-145 each coordinate substrate. ATP-binding positions include 177–179 (RNE), 187–192 (FRTCEF), 262–263 (EV), and 308–311 (GLTR). 192–196 (FEQME) serves as a coordination point for substrate. 304–308 (ETSAG) contributes to the substrate binding site.

Belongs to the class-II aminoacyl-tRNA synthetase family. Homodimer.

It localises to the cytoplasm. The enzyme catalyses tRNA(Gly) + glycine + ATP = glycyl-tRNA(Gly) + AMP + diphosphate. In terms of biological role, catalyzes the attachment of glycine to tRNA(Gly). The polypeptide is Glycine--tRNA ligase (Borrelia garinii subsp. bavariensis (strain ATCC BAA-2496 / DSM 23469 / PBi) (Borreliella bavariensis)).